Consider the following 107-residue polypeptide: SH3 domain-binding glutamic acid-rich-like protein 2 (107 aa).

An SH3-binding motif is present at residues 61–67 (QGNPLPP).

Belongs to the SH3BGR family.

It is found in the nucleus. This chain is SH3 domain-binding glutamic acid-rich-like protein 2 (Sh3bgrl2), found in Mus musculus (Mouse).